The primary structure comprises 211 residues: Large ribosomal subunit protein uL4 (211 aa).

The tract at residues 40–87 (QQAHTRQGTASTLTRSEVRGGGRKPYKQKGTGRARQGSIRTPLRPGGG) is disordered. Residues 41 to 54 (QAHTRQGTASTLTR) show a composition bias toward polar residues. Residues 60–71 (GGRKPYKQKGTG) are compositionally biased toward basic residues.

Belongs to the universal ribosomal protein uL4 family. In terms of assembly, part of the 50S ribosomal subunit.

Functionally, one of the primary rRNA binding proteins, this protein initially binds near the 5'-end of the 23S rRNA. It is important during the early stages of 50S assembly. It makes multiple contacts with different domains of the 23S rRNA in the assembled 50S subunit and ribosome. Forms part of the polypeptide exit tunnel. This chain is Large ribosomal subunit protein uL4, found in Synechococcus sp. (strain WH7803).